Reading from the N-terminus, the 501-residue chain is L-ornithine N(5)-monooxygenase (501 aa).

The disordered stretch occupies residues 1-31 (MESVERKSESSYLGMRNMQPEQRLSLDPPRL). FAD is bound by residues 83-91 (ERQKQFAWH) and Gln-102. Lys-107 contacts substrate. FAD is bound at residue Val-168. Residues 254 to 257 (SGQS) and Arg-279 contribute to the NADP(+) site. Residues 293-296 (NEIF) and Asn-323 each bind substrate. 323 to 325 (NYS) lines the NADP(+) pocket. The interval 366 to 390 (EHHGPQSRMRIHLKSSKPESEGAAN) is disordered. The span at 381 to 390 (SKPESEGAAN) shows a compositional bias: basic and acidic residues. 466–468 (SLL) lines the FAD pocket. Residue Ser-469 coordinates substrate.

The protein belongs to the lysine N(6)-hydroxylase/L-ornithine N(5)-oxygenase family. As to quaternary structure, homotetramer. The cofactor is FAD.

It catalyses the reaction L-ornithine + NADPH + O2 = N(5)-hydroxy-L-ornithine + NADP(+) + H2O. The enzyme catalyses L-ornithine + NADH + O2 = N(5)-hydroxy-L-ornithine + NAD(+) + H2O. It participates in siderophore biosynthesis; ferrichrome biosynthesis. Its function is as follows. L-ornithine N(5)-monooxygenase; part of the siderophore biosynthetic pathway. Aspergillus fumigatus produces four types of siderophores, low-molecular-mass iron chelators, including excreted fusarinine C (FsC) and triacetylfusarinine C (TAFC) for iron uptake; and intacellular ferricrocin (FC) for hyphal and hydroxyferricrocin (HFC) for conidial iron distribution and storage. TAFC consists of three N(2)-acetyl-N(5)-anhydromevalonyl-N(5)-hydroxyornithine residues cyclically linked by ester bonds; FC is a cyclic hexapeptide with the structure Gly-Ser-Gly-(N(5)-acetyl-N(5)-hydroxyornithine)x3. The biosynthesis of all four siderophores depends on the hydroxylation of ornithine, catalyzed by the monooxygenase sidA. SidA is highly specific for its substrate, only hydrolyzing l-ornithine, and has preference for NADPH over NADH, NADPH playing a role in stabilization of the C4a-hydroperoxyflavin intermediate. Subsequently, the pathways for biosynthesis of extra- and intracellular siderophores split. For biosynthesis of extracellular siderophores, the transacylase sidF transfers anhydromevalonyl to N(5)-hydroxyornithine. The required anhydromevalonyl-CoA moiety is derived from mevalonate by CoA ligation and dehydration catalyzed by sidI and sidH respectively. The acetylation of N(5)-hydroxyornithine for FC biosynthesis involves the constitutively expressed sidL. FC is hydroxylated to HFC by an as yet uncharacterized enzyme during conidiation. Assembly of fusarinine C (FsC) and FC is catalyzed by two different nonribosomal peptide synthetases (NRPS), sidD and sidC respectively. Subsequently, sidG catalyzes N2-acetylation of FsC for forming TAFC. Both extra- and intracellular siderophores are crucial for growth during iron limitation and virulence. The polypeptide is L-ornithine N(5)-monooxygenase (Aspergillus fumigatus (strain ATCC MYA-4609 / CBS 101355 / FGSC A1100 / Af293) (Neosartorya fumigata)).